We begin with the raw amino-acid sequence, 309 residues long: NADH-cytochrome b5 reductase 2 (309 aa).

A helical transmembrane segment spans residues 3-23 (ILTAPVLIGVSIVVITVLYLF). The 113-residue stretch at 48 to 160 (SVKYPLPLIE…RGPNGLLVYN (113 aa)) folds into the FAD-binding FR-type domain. FAD-binding positions include 140–170 (DNMKIGDTIDFRGPNGLLVYNGKGKFAIRPD) and 179–214 (KFKHVAMIAGGTGITPMLQLIRSITADSFDETVCSL).

Belongs to the flavoprotein pyridine nucleotide cytochrome reductase family. It depends on FAD as a cofactor.

The protein localises to the membrane. The catalysed reaction is 2 Fe(III)-[cytochrome b5] + NADH = 2 Fe(II)-[cytochrome b5] + NAD(+) + H(+). In terms of biological role, NADH-cytochrome b5 reductases are involved in desaturation and elongation of fatty acids, cholesterol biosynthesis and drug metabolism. The polypeptide is NADH-cytochrome b5 reductase 2 (cyb5r2) (Danio rerio (Zebrafish)).